We begin with the raw amino-acid sequence, 441 residues long: ATP-dependent protease ATPase subunit HslU (441 aa).

Residues Ile18, 60–65 (GVGKTE), Asp254, Glu319, and Arg391 each bind ATP.

This sequence belongs to the ClpX chaperone family. HslU subfamily. In terms of assembly, a double ring-shaped homohexamer of HslV is capped on each side by a ring-shaped HslU homohexamer. The assembly of the HslU/HslV complex is dependent on binding of ATP.

The protein localises to the cytoplasm. Functionally, ATPase subunit of a proteasome-like degradation complex; this subunit has chaperone activity. The binding of ATP and its subsequent hydrolysis by HslU are essential for unfolding of protein substrates subsequently hydrolyzed by HslV. HslU recognizes the N-terminal part of its protein substrates and unfolds these before they are guided to HslV for hydrolysis. The chain is ATP-dependent protease ATPase subunit HslU from Shewanella woodyi (strain ATCC 51908 / MS32).